The sequence spans 95 residues: Co-chaperonin GroES (95 aa).

The protein belongs to the GroES chaperonin family. As to quaternary structure, heptamer of 7 subunits arranged in a ring. Interacts with the chaperonin GroEL.

The protein localises to the cytoplasm. Its function is as follows. Together with the chaperonin GroEL, plays an essential role in assisting protein folding. The GroEL-GroES system forms a nano-cage that allows encapsulation of the non-native substrate proteins and provides a physical environment optimized to promote and accelerate protein folding. GroES binds to the apical surface of the GroEL ring, thereby capping the opening of the GroEL channel. In Methylocella silvestris (strain DSM 15510 / CIP 108128 / LMG 27833 / NCIMB 13906 / BL2), this protein is Co-chaperonin GroES.